A 657-amino-acid polypeptide reads, in one-letter code: UvrABC system protein B (657 aa).

Positions 24–409 (AGVRNQVKSQ…SGHIVQQIIR (386 aa)) constitute a Helicase ATP-binding domain. 37–44 (GTTGSGKT) lines the ATP pocket. Residues 90 to 113 (YYDYYQPEAYIARSDTYIEKSLLI) carry the Beta-hairpin motif. The 164-residue stretch at 426–589 (QVDDLLEEIR…IVPKPIIKAI (164 aa)) folds into the Helicase C-terminal domain. Positions 617–652 (EEQIKKYEALMQRAAKEFRFNEAAKYRDAMQACKEQ) constitute a UVR domain.

This sequence belongs to the UvrB family. As to quaternary structure, forms a heterotetramer with UvrA during the search for lesions. Interacts with UvrC in an incision complex.

The protein resides in the cytoplasm. In terms of biological role, the UvrABC repair system catalyzes the recognition and processing of DNA lesions. A damage recognition complex composed of 2 UvrA and 2 UvrB subunits scans DNA for abnormalities. Upon binding of the UvrA(2)B(2) complex to a putative damaged site, the DNA wraps around one UvrB monomer. DNA wrap is dependent on ATP binding by UvrB and probably causes local melting of the DNA helix, facilitating insertion of UvrB beta-hairpin between the DNA strands. Then UvrB probes one DNA strand for the presence of a lesion. If a lesion is found the UvrA subunits dissociate and the UvrB-DNA preincision complex is formed. This complex is subsequently bound by UvrC and the second UvrB is released. If no lesion is found, the DNA wraps around the other UvrB subunit that will check the other stand for damage. The chain is UvrABC system protein B from Chlamydia pneumoniae (Chlamydophila pneumoniae).